Consider the following 61-residue polypeptide: Adipokinetic prohormone type 2 (61 aa).

The N-terminal stretch at 1-22 (MRQGCALTLMLLVVVCAALSAA) is a signal peptide. The residue at position 23 (Gln-23) is a Pyrrolidone carboxylic acid. At Trp-30 the chain carries Tryptophan amide.

Belongs to the AKH/HRTH/RPCH family. In terms of assembly, adipokinetic hormone precursor-related peptide (APRP) can form three type of disulfide-bond dimers: p1 (alpha-alpha), p2 (alpha-beta), and p3 (beta-beta).

It localises to the secreted. Its function is as follows. This hormone, released from cells in the corpora cardiaca, causes release of diglycerides from the fat body and stimulation of muscles to use these diglycerides as an energy source during energy-demanding processes. This Schistocerca nitens (Vagrant locust) protein is Adipokinetic prohormone type 2.